A 306-amino-acid chain; its full sequence is Recombination-associated protein RdgC (306 aa).

This sequence belongs to the RdgC family.

It localises to the cytoplasm. It is found in the nucleoid. Its function is as follows. May be involved in recombination. This is Recombination-associated protein RdgC from Pseudomonas aeruginosa (strain LESB58).